A 312-amino-acid chain; its full sequence is MFKHETVLLHETVDMLEVKPDGIYVDATLGGAGHSEYLLNKLNEKGHLFAFDQDQTAIDNAKIKLADYSDKVTFIKANFRDMKEALNERGIEAVDGILYDLGVSSPQLDERERGFSYHQDAALDMRMDQEQELTAKTVVNEWSYQDLIRIFFQYGEEKFSKQIAREIERRREVKPIETTGELVDIIKTAIPAPARRKGGHPGKRTFQAIRIAVNDELGAVEDSLEKALTLIKPGGRISVITFHSLEDRITKQLFQEATKGPDLPPGLPVIPDEYKPDFKLATRKPIVPSEEELEQNNRARSAKLRVIEKIIK.

Residues 32–34 (AGH), Asp52, Phe79, Asp100, and Gln107 each bind S-adenosyl-L-methionine.

This sequence belongs to the methyltransferase superfamily. RsmH family.

It localises to the cytoplasm. The enzyme catalyses cytidine(1402) in 16S rRNA + S-adenosyl-L-methionine = N(4)-methylcytidine(1402) in 16S rRNA + S-adenosyl-L-homocysteine + H(+). In terms of biological role, specifically methylates the N4 position of cytidine in position 1402 (C1402) of 16S rRNA. In Listeria monocytogenes serovar 1/2a (strain ATCC BAA-679 / EGD-e), this protein is Ribosomal RNA small subunit methyltransferase H.